Here is a 189-residue protein sequence, read N- to C-terminus: Protein GrpE (189 aa).

The interval 1–22 (MKEQQKETEQNIEEINDETVTE) is disordered. A compositionally biased stretch (acidic residues) spans 10 to 22 (QNIEEINDETVTE).

The protein belongs to the GrpE family. Homodimer.

It localises to the cytoplasm. Its function is as follows. Participates actively in the response to hyperosmotic and heat shock by preventing the aggregation of stress-denatured proteins, in association with DnaK and GrpE. It is the nucleotide exchange factor for DnaK and may function as a thermosensor. Unfolded proteins bind initially to DnaJ; upon interaction with the DnaJ-bound protein, DnaK hydrolyzes its bound ATP, resulting in the formation of a stable complex. GrpE releases ADP from DnaK; ATP binding to DnaK triggers the release of the substrate protein, thus completing the reaction cycle. Several rounds of ATP-dependent interactions between DnaJ, DnaK and GrpE are required for fully efficient folding. The protein is Protein GrpE of Leuconostoc citreum (strain KM20).